Consider the following 695-residue polypeptide: Polyribonucleotide nucleotidyltransferase (695 aa).

Asp-486 and Asp-492 together coordinate Mg(2+). The region spanning 553-612 (PRMIVFKINPEKIRDVIGKGGATIRALTEETGTTIDIVDDGTVKIFSADKADGQEAKRRV) is the KH domain. The region spanning 622–690 (GKIYEGRVSR…KQGRVRLSVK (69 aa)) is the S1 motif domain.

Belongs to the polyribonucleotide nucleotidyltransferase family. Component of the RNA degradosome, which is a multiprotein complex involved in RNA processing and mRNA degradation. Requires Mg(2+) as cofactor.

It is found in the cytoplasm. The enzyme catalyses RNA(n+1) + phosphate = RNA(n) + a ribonucleoside 5'-diphosphate. In terms of biological role, involved in mRNA degradation. Catalyzes the phosphorolysis of single-stranded polyribonucleotides processively in the 3'- to 5'-direction. This Nitrosococcus oceani (strain ATCC 19707 / BCRC 17464 / JCM 30415 / NCIMB 11848 / C-107) protein is Polyribonucleotide nucleotidyltransferase.